The primary structure comprises 519 residues: Protein M35 (519 aa).

A disordered region spans residues Pro-485–Val-519. Over residues Arg-510–Val-519 the composition is skewed to basic residues.

Its subcellular location is the host nucleus. Plays a role in the inhibition of host type I interferon production within the host nucleus. Targets specifically the NF-kappa-B-mediated interferon-beta transcription. The sequence is that of Protein M35 (M35) from Mus musculus (Mouse).